Reading from the N-terminus, the 443-residue chain is tRNA-2-methylthio-N(6)-dimethylallyladenosine synthase (443 aa).

The region spanning 3-120 (SKLYIRTFGC…LPDLIDARRR (118 aa)) is the MTTase N-terminal domain. Cys12, Cys49, Cys83, Cys157, Cys161, and Cys164 together coordinate [4Fe-4S] cluster. Positions 143 to 375 (RTEGSTAFVS…QEKIQLNAQA (233 aa)) constitute a Radical SAM core domain. Residues 378 to 441 (QGMVDTVQRI…SHTLRGEISD (64 aa)) form the TRAM domain.

It belongs to the methylthiotransferase family. MiaB subfamily. In terms of assembly, monomer. Requires [4Fe-4S] cluster as cofactor.

The protein localises to the cytoplasm. The enzyme catalyses N(6)-dimethylallyladenosine(37) in tRNA + (sulfur carrier)-SH + AH2 + 2 S-adenosyl-L-methionine = 2-methylsulfanyl-N(6)-dimethylallyladenosine(37) in tRNA + (sulfur carrier)-H + 5'-deoxyadenosine + L-methionine + A + S-adenosyl-L-homocysteine + 2 H(+). In terms of biological role, catalyzes the methylthiolation of N6-(dimethylallyl)adenosine (i(6)A), leading to the formation of 2-methylthio-N6-(dimethylallyl)adenosine (ms(2)i(6)A) at position 37 in tRNAs that read codons beginning with uridine. In Nitrosomonas europaea (strain ATCC 19718 / CIP 103999 / KCTC 2705 / NBRC 14298), this protein is tRNA-2-methylthio-N(6)-dimethylallyladenosine synthase.